A 116-amino-acid polypeptide reads, in one-letter code: Large ribosomal subunit protein bL17 (116 aa).

The protein belongs to the bacterial ribosomal protein bL17 family. Part of the 50S ribosomal subunit. Contacts protein L32.

This chain is Large ribosomal subunit protein bL17, found in Deinococcus geothermalis (strain DSM 11300 / CIP 105573 / AG-3a).